A 274-amino-acid chain; its full sequence is tRNA pseudouridine synthase A (274 aa).

The active-site Nucleophile is aspartate 57. Tyrosine 115 serves as a coordination point for substrate.

The protein belongs to the tRNA pseudouridine synthase TruA family. Homodimer.

It carries out the reaction uridine(38/39/40) in tRNA = pseudouridine(38/39/40) in tRNA. Functionally, formation of pseudouridine at positions 38, 39 and 40 in the anticodon stem and loop of transfer RNAs. The chain is tRNA pseudouridine synthase A from Frankia casuarinae (strain DSM 45818 / CECT 9043 / HFP020203 / CcI3).